Consider the following 245-residue polypeptide: Probable phosphatase YcdX (245 aa).

The Zn(2+) site is built by H7, H9, H15, H40, E73, H101, H131, D192, and H194.

It belongs to the PHP family. As to quaternary structure, homotrimer. Zn(2+) is required as a cofactor.

This is Probable phosphatase YcdX from Escherichia coli O81 (strain ED1a).